The sequence spans 699 residues: Elongation factor G (699 aa).

Positions 8-283 (EHIRNIGICA…AIVDFLPSPI (276 aa)) constitute a tr-type G domain. Residues 17 to 24 (AHIDAGKT), 81 to 85 (DTPGH), and 135 to 138 (NKMD) each bind GTP.

Belongs to the TRAFAC class translation factor GTPase superfamily. Classic translation factor GTPase family. EF-G/EF-2 subfamily.

Its subcellular location is the cytoplasm. Functionally, catalyzes the GTP-dependent ribosomal translocation step during translation elongation. During this step, the ribosome changes from the pre-translocational (PRE) to the post-translocational (POST) state as the newly formed A-site-bound peptidyl-tRNA and P-site-bound deacylated tRNA move to the P and E sites, respectively. Catalyzes the coordinated movement of the two tRNA molecules, the mRNA and conformational changes in the ribosome. This chain is Elongation factor G, found in Rickettsia typhi (strain ATCC VR-144 / Wilmington).